Consider the following 216-residue polypeptide: Probable GTP-binding protein EngB (216 aa).

Residues 37 to 214 form the EngB-type G domain; it reads GSVEIAFAGR…RAAMIRLLDE (178 aa). GTP contacts are provided by residues 45–52, 72–76, 92–95, 159–162, and 193–195; these read GRSNVGKS, GRTQE, DMPG, TKAD, and TSS. Mg(2+)-binding residues include Ser52 and Thr74.

It belongs to the TRAFAC class TrmE-Era-EngA-EngB-Septin-like GTPase superfamily. EngB GTPase family. It depends on Mg(2+) as a cofactor.

Functionally, necessary for normal cell division and for the maintenance of normal septation. The chain is Probable GTP-binding protein EngB from Rhodopseudomonas palustris (strain TIE-1).